Reading from the N-terminus, the 546-residue chain is DDB1- and CUL4-associated factor 11 (546 aa).

Low complexity predominate over residues 1 to 19; that stretch reads MGSRNSSSAGSGSGDPSEG. Residues 1-40 form a disordered region; sequence MGSRNSSSAGSGSGDPSEGLTRRGAGLRRSEEEEEEDEDV. Serine 75 is subject to Phosphoserine. WD repeat units lie at residues 170-210, 216-258, 263-302, 305-345, 353-392, 435-480, and 481-520; these read SYSQ…RKFK, DVGW…TALD, ERRF…RTLQ, SHED…EDDP, GHQD…SREG, GVLH…KKLT, and NHKA…YFQD. The interval 523–546 is disordered; the sequence is PESEECASAPAPVPRSSTPFSSPQ. A compositionally biased stretch (polar residues) spans 537–546; it reads RSSTPFSSPQ.

Interacts with DDB1 and CUL4A.

It participates in protein modification; protein ubiquitination. Functionally, may function as a substrate receptor for CUL4-DDB1 E3 ubiquitin-protein ligase complex. This is DDB1- and CUL4-associated factor 11 (DCAF11) from Pongo abelii (Sumatran orangutan).